Consider the following 229-residue polypeptide: Ribonuclease 3 (229 aa).

The RNase III domain maps to 4-133 (WEELQESVGF…FIGALYLDNG (130 aa)). Glutamate 46 contributes to the Mg(2+) binding site. Aspartate 50 is a catalytic residue. Mg(2+) is bound by residues aspartate 119 and glutamate 122. Glutamate 122 is a catalytic residue. One can recognise a DRBM domain in the interval 159–228 (DYKTQLQEIV…AQFAINQLTH (70 aa)).

This sequence belongs to the ribonuclease III family. As to quaternary structure, homodimer. Mg(2+) serves as cofactor.

It is found in the cytoplasm. The catalysed reaction is Endonucleolytic cleavage to 5'-phosphomonoester.. Digests double-stranded RNA. Involved in the processing of primary rRNA transcript to yield the immediate precursors to the large and small rRNAs (23S and 16S). Processes some mRNAs, and tRNAs when they are encoded in the rRNA operon. Processes pre-crRNA and tracrRNA of type II CRISPR loci if present in the organism. This chain is Ribonuclease 3, found in Listeria monocytogenes serotype 4a (strain HCC23).